The sequence spans 680 residues: Chaperone protein dnaK3 (680 aa).

Threonine 205 is subject to Phosphothreonine; by autocatalysis. The segment at 640 to 680 (GRERRRDDDEDEWAEPPRTRRSRSYSQRADSAPWDDWDDDW) is disordered.

It belongs to the heat shock protein 70 family.

Its function is as follows. Acts as a chaperone. This chain is Chaperone protein dnaK3 (dnaK3), found in Thermosynechococcus vestitus (strain NIES-2133 / IAM M-273 / BP-1).